Consider the following 120-residue polypeptide: Holo-[acyl-carrier-protein] synthase (120 aa).

Residues D8 and E58 each contribute to the Mg(2+) site.

It belongs to the P-Pant transferase superfamily. AcpS family. Mg(2+) serves as cofactor.

Its subcellular location is the cytoplasm. The enzyme catalyses apo-[ACP] + CoA = holo-[ACP] + adenosine 3',5'-bisphosphate + H(+). Functionally, transfers the 4'-phosphopantetheine moiety from coenzyme A to a Ser of acyl-carrier-protein. This chain is Holo-[acyl-carrier-protein] synthase, found in Anoxybacillus flavithermus (strain DSM 21510 / WK1).